The primary structure comprises 64 residues: KEGYLMDHEGCKLSCFIRPSGYCGRECAIKKGSSGYCAWPACYCYGLPNWVKVWERATNRCGKK.

In terms of domain architecture, LCN-type CS-alpha/beta spans 1–62 (KEGYLMDHEG…VWERATNRCG (62 aa)). Cystine bridges form between Cys11–Cys61, Cys15–Cys37, Cys23–Cys42, and Cys27–Cys44. At Cys61 the chain carries Cysteine amide.

This sequence belongs to the long (4 C-C) scorpion toxin superfamily. Sodium channel inhibitor family. Beta subfamily. In terms of tissue distribution, expressed by the venom gland.

It localises to the secreted. Its function is as follows. Beta toxins bind voltage-independently at site-4 of sodium channels (Nav) and shift the voltage of activation toward more negative potentials thereby affecting sodium channel activation and promoting spontaneous and repetitive firing. In Tityus fasciolatus (Central Brazilian scorpion), this protein is Beta-toxin Tf1.